The chain runs to 34 residues: Ribonuclease PL1 (34 aa).

N-linked (GlcNAc...) asparagine; partial glycosylation occurs at asparagine 4. Histidine 15 serves as the catalytic Proton acceptor.

Belongs to the pancreatic ribonuclease family.

It localises to the lysosome. It catalyses the reaction an [RNA] containing cytidine + H2O = an [RNA]-3'-cytidine-3'-phosphate + a 5'-hydroxy-ribonucleotide-3'-[RNA].. The enzyme catalyses an [RNA] containing uridine + H2O = an [RNA]-3'-uridine-3'-phosphate + a 5'-hydroxy-ribonucleotide-3'-[RNA].. In Sus scrofa (Pig), this protein is Ribonuclease PL1.